We begin with the raw amino-acid sequence, 395 residues long: Transcription termination/antitermination protein NusA (395 aa).

The S1 motif domain occupies asparagine 137–serine 201. KH domains are found at residues serine 243–leucine 291 and lysine 331–glutamate 378.

Belongs to the NusA family. As to quaternary structure, monomer. Binds directly to the core enzyme of the DNA-dependent RNA polymerase and to nascent RNA.

It is found in the cytoplasm. In terms of biological role, participates in both transcription termination and antitermination. The chain is Transcription termination/antitermination protein NusA from Helicobacter pylori (strain ATCC 700392 / 26695) (Campylobacter pylori).